The chain runs to 463 residues: Arginine biosynthesis bifunctional protein ArgJ, chloroplastic (463 aa).

Thr207, Lys233, Thr244, Glu331, Asn458, and Thr463 together coordinate substrate. The Nucleophile role is filled by Thr244.

Belongs to the ArgJ family. Heterodimer of an alpha and a beta chain.

It is found in the plastid. It localises to the chloroplast. The enzyme catalyses N(2)-acetyl-L-ornithine + L-glutamate = N-acetyl-L-glutamate + L-ornithine. It carries out the reaction L-glutamate + acetyl-CoA = N-acetyl-L-glutamate + CoA + H(+). It functions in the pathway amino-acid biosynthesis; L-arginine biosynthesis; L-ornithine and N-acetyl-L-glutamate from L-glutamate and N(2)-acetyl-L-ornithine (cyclic): step 1/1. It participates in amino-acid biosynthesis; L-arginine biosynthesis; N(2)-acetyl-L-ornithine from L-glutamate: step 1/4. Its function is as follows. Catalyzes two activities which are involved in the cyclic version of arginine biosynthesis: the synthesis of acetylglutamate from glutamate and acetyl-CoA, and of ornithine by transacetylation between acetylornithine and glutamate. This is Arginine biosynthesis bifunctional protein ArgJ, chloroplastic from Oryza sativa subsp. japonica (Rice).